Reading from the N-terminus, the 158-residue chain is GTP-dependent dephospho-CoA kinase (158 aa).

GTP is bound by residues D35, V36, D54, K56, E109, and D132.

This sequence belongs to the GTP-dependent DPCK family.

It carries out the reaction 3'-dephospho-CoA + GTP = GDP + CoA + H(+). It functions in the pathway cofactor biosynthesis; coenzyme A biosynthesis. Catalyzes the GTP-dependent phosphorylation of the 3'-hydroxyl group of dephosphocoenzyme A to form coenzyme A (CoA). This chain is GTP-dependent dephospho-CoA kinase, found in Methanococcus maripaludis (strain C7 / ATCC BAA-1331).